Here is a 410-residue protein sequence, read N- to C-terminus: Bifunctional malic/malolactic enzyme (410 aa).

Catalysis depends on tyrosine 36, which acts as the Proton donor. Lysine 91 serves as the catalytic Proton acceptor. The a divalent metal cation site is built by glutamate 133, aspartate 134, and aspartate 159. NADP(+)-binding positions include alanine 192 to alanine 195, asparagine 286, and asparagine 317.

Belongs to the malic enzymes family. Interacts with BrxC. Requires Mg(2+) as cofactor. Mn(2+) serves as cofactor.

It catalyses the reaction (S)-malate + NADP(+) = pyruvate + CO2 + NADPH. The enzyme catalyses oxaloacetate + H(+) = pyruvate + CO2. It carries out the reaction (S)-malate + H(+) = (S)-lactate + CO2. With respect to regulation, NADPH is a strong modulator that switches activity from a pyruvate-producing malic enzyme to a lactate-generating malolactic enzyme. Bifunctional enzyme with both malic and malolactic enzyme activities. In the absence of NADPH, catalyzes the reversible decarboxylation of malate to pyruvate. Can use NAD and NADP, but with a very strong preference for NADP. In the presence of excess NADPH, catalyzes the non-oxidative decarboxylation of malate to lactate. During growth on glucose, contributes to NADPH balancing via oxidation of the NADPH produced in excess by other enzymatic reactions. Can also catalyze the decarboxylation of oxaloacetate. The sequence is that of Bifunctional malic/malolactic enzyme (ytsJ) from Bacillus subtilis (strain 168).